We begin with the raw amino-acid sequence, 349 residues long: Protein POOR HOMOLOGOUS SYNAPSIS 1 (349 aa).

It localises to the cytoplasm. Functionally, required for accurate chromosome segregation in meiosis. Required for pairing to occur between homologous chromosomes. Acts in early recombination steps and ensures pairing fidelity and proper repair of meiotic DNA double-strand-breaks. Regulates recombination and pairing of homologous chromosomes during meiotic prophase by controlling transport of RAD50 from cytoplasm to the nucleus. May affect pairing of the gene-rich fraction of the genome rather than preventing pairing between repetitive DNA elements. In Arabidopsis thaliana (Mouse-ear cress), this protein is Protein POOR HOMOLOGOUS SYNAPSIS 1.